The sequence spans 469 residues: Septin homolog spn1 (469 aa).

The segment at 1 to 58 (MASMVLADGMPTVKDDSTRSRGSDVDSFTSTDNVTQINVEAAISENKNEEKPIQDNSE) is disordered. Residues 13–24 (VKDDSTRSRGSD) show a composition bias toward basic and acidic residues. Residues 26–38 (DSFTSTDNVTQIN) show a composition bias toward polar residues. In terms of domain architecture, Septin-type G spans 92-367 (QGFNFNVLVL…EAYRTERLLS (276 aa)). The tract at residues 102-109 (GESGSGKS) is G1 motif. GTP is bound by residues 102–109 (GESGSGKS), Thr-139, Gly-165, 244–252 (KADTLTDDE), and Arg-317. Residues 162-165 (DTPG) form a G3 motif region. The interval 243 to 246 (AKAD) is G4 motif. A coiled-coil region spans residues 383-469 (SAKLEEERAL…NEKSKRKFFK (87 aa)).

Belongs to the TRAFAC class TrmE-Era-EngA-EngB-Septin-like GTPase superfamily. Septin GTPase family. Component of the septin complex composed of two copies of each spn1, spn2, spn3 and spn4.

It localises to the cytoplasm. The protein localises to the cell cortex. Functionally, plays a role in the cell cycle. Involved in a late stage of septum formation leading to the separation of the daughter cells. This is Septin homolog spn1 (spn1) from Schizosaccharomyces pombe (strain 972 / ATCC 24843) (Fission yeast).